An 823-amino-acid chain; its full sequence is Ankyrin repeat domain-containing protein 20B (823 aa).

ANK repeat units follow at residues 32-65, 66-95, 99-128, 132-161, 165-194, and 198-227; these read SELQKIHRAAVKGDAAEVERCLARRSGDLDARDK, QHRTALHLACASGHVQVVTLLVNRKCQIDI, ENRTPLIQAVHCQEEACAVILLKHGANPNL, YGNTALHYAVYSESTSLAEKLLSHGAHIEA, DSNTPLLFAIICKKEKMVEFLLKKKASTHA, and LRRSALMLAVYYDSPGIVSILLKQNIDVFA. Disordered regions lie at residues 302-343 and 355-401; these read PEKV…GVED and VQTL…QLSE. A compositionally biased stretch (basic and acidic residues) spans 372 to 382; sequence QERHERSEKKQ. Coiled-coil stretches lie at residues 431-480, 565-724, and 776-805; these read KKLK…KQLE, EMIT…NNST, and LVLEEKSKKLMNECDHLKESLFQYEREKAE.

The polypeptide is Ankyrin repeat domain-containing protein 20B (ANKRD20A8P) (Homo sapiens (Human)).